Reading from the N-terminus, the 453-residue chain is o-phthalyl amidase (453 aa).

In terms of assembly, monomer. The N-terminus is blocked.

It catalyses the reaction a phtalamide + H2O = phthalate + a primary amine. Inhibited by iodoacetate, p-hydroxymercuric benzoate and copper ions. Functionally, catalyzes the removal of the phthalyl group from phthalyl amides generating phthalate and an amine. The enzyme has a broad substrate specificity and hydrolyzes phthalylated amino acids, peptides, beta-lactams, aromatic and aliphatic amines; substitutions allowed on the phthalyl group include 6-F, 6-NH(2), 3-OH, and a nitrogen in the aromatic ring ortho to the carboxy group attached to the amine. In Xanthobacter agilis, this protein is o-phthalyl amidase.